A 237-amino-acid polypeptide reads, in one-letter code: tRNA (guanine-N(7)-)-methyltransferase (237 aa).

The S-adenosyl-L-methionine site is built by Glu-67, Glu-92, Asp-119, and Asp-142. Asp-142 is an active-site residue. Substrate contacts are provided by residues Lys-146, Asp-178, and 215–218; that span reads TKFE.

This sequence belongs to the class I-like SAM-binding methyltransferase superfamily. TrmB family.

It carries out the reaction guanosine(46) in tRNA + S-adenosyl-L-methionine = N(7)-methylguanosine(46) in tRNA + S-adenosyl-L-homocysteine. The protein operates within tRNA modification; N(7)-methylguanine-tRNA biosynthesis. Its function is as follows. Catalyzes the formation of N(7)-methylguanine at position 46 (m7G46) in tRNA. The polypeptide is tRNA (guanine-N(7)-)-methyltransferase (Aeromonas hydrophila subsp. hydrophila (strain ATCC 7966 / DSM 30187 / BCRC 13018 / CCUG 14551 / JCM 1027 / KCTC 2358 / NCIMB 9240 / NCTC 8049)).